A 56-amino-acid polypeptide reads, in one-letter code: Small ribosomal subunit protein uS14 (56 aa).

4 residues coordinate Zn(2+): C21, C24, C39, and C42.

This sequence belongs to the universal ribosomal protein uS14 family. As to quaternary structure, component of the 40S small ribosomal subunit. The cofactor is Zn(2+).

The protein resides in the cytoplasm. It is found in the cytosol. The protein localises to the rough endoplasmic reticulum. The protein is Small ribosomal subunit protein uS14 (RpS29) of Spodoptera frugiperda (Fall armyworm).